Reading from the N-terminus, the 240-residue chain is Ribonuclease PH (240 aa).

Phosphate contacts are provided by residues Arg-87 and 125 to 127 (GTR).

This sequence belongs to the RNase PH family. As to quaternary structure, homohexameric ring arranged as a trimer of dimers.

The catalysed reaction is tRNA(n+1) + phosphate = tRNA(n) + a ribonucleoside 5'-diphosphate. Functionally, phosphorolytic 3'-5' exoribonuclease that plays an important role in tRNA 3'-end maturation. Removes nucleotide residues following the 3'-CCA terminus of tRNAs; can also add nucleotides to the ends of RNA molecules by using nucleoside diphosphates as substrates, but this may not be physiologically important. Probably plays a role in initiation of 16S rRNA degradation (leading to ribosome degradation) during starvation. This is Ribonuclease PH from Pseudomonas fluorescens (strain ATCC BAA-477 / NRRL B-23932 / Pf-5).